The sequence spans 360 residues: Peptide chain release factor 1 (360 aa).

Glutamine 235 bears the N5-methylglutamine mark. Over residues 284–293 (ARRQQEESST) the composition is skewed to basic and acidic residues. Residues 284 to 314 (ARRQQEESSTRRNLLGSGDRSDRNRTYNFPQ) form a disordered region.

The protein belongs to the prokaryotic/mitochondrial release factor family. In terms of processing, methylated by PrmC. Methylation increases the termination efficiency of RF1.

Its subcellular location is the cytoplasm. Its function is as follows. Peptide chain release factor 1 directs the termination of translation in response to the peptide chain termination codons UAG and UAA. The protein is Peptide chain release factor 1 of Erwinia tasmaniensis (strain DSM 17950 / CFBP 7177 / CIP 109463 / NCPPB 4357 / Et1/99).